The chain runs to 241 residues: UDP-2,3-diacylglucosamine hydrolase (241 aa).

Mn(2+) is bound by residues Asp8, His10, Asp41, Asn79, and His114. 79–80 (NR) lines the substrate pocket. Positions 122, 160, 164, 167, and 195 each coordinate substrate. Residues His195 and His197 each coordinate Mn(2+).

The protein belongs to the LpxH family. It depends on Mn(2+) as a cofactor.

It is found in the cell inner membrane. The catalysed reaction is UDP-2-N,3-O-bis[(3R)-3-hydroxytetradecanoyl]-alpha-D-glucosamine + H2O = 2-N,3-O-bis[(3R)-3-hydroxytetradecanoyl]-alpha-D-glucosaminyl 1-phosphate + UMP + 2 H(+). Its pathway is glycolipid biosynthesis; lipid IV(A) biosynthesis; lipid IV(A) from (3R)-3-hydroxytetradecanoyl-[acyl-carrier-protein] and UDP-N-acetyl-alpha-D-glucosamine: step 4/6. In terms of biological role, hydrolyzes the pyrophosphate bond of UDP-2,3-diacylglucosamine to yield 2,3-diacylglucosamine 1-phosphate (lipid X) and UMP by catalyzing the attack of water at the alpha-P atom. Involved in the biosynthesis of lipid A, a phosphorylated glycolipid that anchors the lipopolysaccharide to the outer membrane of the cell. The sequence is that of UDP-2,3-diacylglucosamine hydrolase from Aeromonas hydrophila subsp. hydrophila (strain ATCC 7966 / DSM 30187 / BCRC 13018 / CCUG 14551 / JCM 1027 / KCTC 2358 / NCIMB 9240 / NCTC 8049).